The primary structure comprises 105 residues: Met repressor (105 aa).

This sequence belongs to the MetJ family. Homodimer.

The protein localises to the cytoplasm. This regulatory protein, when combined with SAM (S-adenosylmethionine) represses the expression of the methionine regulon and of enzymes involved in SAM synthesis. The sequence is that of Met repressor from Proteus mirabilis (strain HI4320).